The chain runs to 800 residues: MSRRRAHDTEDEGYDHRRNKRRRVSENQEIEDRLESLILRVGERSTSSVESNLEGLVSVLEADLGTFRLKILRILSDCAVRMPEKCTVYTTLVGLLNAKNYKFGGEFVDHMVKTFKESLKLCRWDAARYSLRFLADLVNCHVISATSLLQLLDTMIDVSNEDTVPQVRRDWFVFAVLSTLPWVGRDLYEKKESALESLLLRIEVYLNKRSKKHHNALRVWSSDAPHPQEEYLDCLWAQIRKLRQDNWAEKHIPRPYLVFDSILCEALQHNLPQIIPPPHHDAFEYPMPWVVYRMFDYTDCPDGPNLPGAHSIERFLIEEHLHHIIETHHYERKDCAAQLLNFPFKHKIPLEYCIVEVIFAELFHMPTPRYLDICYGSILIELCKLQPGTLPQVLAQATEILFMRIDSMNTSCFDRFVNWFSYHLSNFKFTWSWDEWDSCLLLEAEHPRPKFIQEVLQKCLRLSYHQRITEMMPTTYAKLIPLTPVPNYKYANEEAANLPGTTVAHQLVVAIRQKCTPEEVVNILKEIPSSGYSGEEMSDGSFNALKIDVFVQTLLNLGSKSFSHSFAAISKFHAVFRALAETEEAQICILHNIFELWSSHQQMMVVLIDKLLKLQIVDCSAVATWIFSKEMTGEFTKMYLWEILHLTIKKMNKHVIKLNTELSDAKDKLSKADSSSSDSDEDTPHKRKKPITHADKPSEEVVERMEEKLEAANVNQKRLFLIVFQRFIMILSEHLLRSDTDGRDPDTDWYRWTIGRLQQVFLMHHEQVQKYSSTLETLLFTSDLDTHILEVFQQFVALRA.

Residues 1–26 (MSRRRAHDTEDEGYDHRRNKRRRVSE) are disordered. Position 9 is a phosphothreonine (threonine 9). Positions 31 to 243 (EDRLESLILR…CLWAQIRKLR (213 aa)) constitute an MIF4G domain. A disordered region spans residues 669 to 699 (LSKADSSSSDSDEDTPHKRKKPITHADKPSE).

This sequence belongs to the NCBP1 family. In terms of assembly, component of the nuclear cap-binding complex (CBC), a heterodimer composed of Cbp80 and Cbp20 that interacts with m7GpppG-capped RNA.

It is found in the nucleus. Its function is as follows. Component of the cap-binding complex (CBC), which binds cotranscriptionally to the 5'-cap of pre-mRNAs and is involved in various processes such as pre-mRNA splicing and RNA-mediated gene silencing (RNAi). The CBC complex is involved in miRNA-mediated RNA interference via its interaction with Ars2 and is required for primary microRNAs (miRNAs) processing. Also involved in innate immunity via the short interfering RNAs (siRNAs) processing machinery by restricting the viral RNA production. In the CBC complex, Cbp80 does not bind directly capped RNAs (m7GpppG-capped RNA) but is required to stabilize the movement of the N-terminal loop of Cbp20 and lock the CBC into a high affinity cap-binding state with the cap structure. In Drosophila willistoni (Fruit fly), this protein is Nuclear cap-binding protein subunit 1 (Cbp80).